The chain runs to 391 residues: MFSPWKISMFLSVREDSVPTTASFSADMLNVTLQGPTLNGTFAQSKCPQVEWLGWLNTIQPPFLWVLFVLATLENIFVLSVFCLHKSSCTVAEIYLGNLAAADLILACGLPFWAITISNNFDWLFGETLCRVVNAIISMNLYSSICFLMLVSIDRYLALVKTMSMGRMRGVRWAKLYSLVIWGCTLLLSSPMLVFRTMKEYSDEGHNVTACVISYPSLIWEVFTNMLLNVVGFLLPLSVITFCTMQIMQVLRNNEMQKFKEIQTERRATVLVLVVLLLFIICWLPFQISTFLDTLHRLGILSSCQDERIIDVITQIASFMAYSNSCLNPLVYVIVGKRFRKKSWEVYQGVCQKGGCRSEPIQMENSMGTLRTSISVERQIHKLQDWAGSRQ.

Over 1–60 (MFSPWKISMFLSVREDSVPTTASFSADMLNVTLQGPTLNGTFAQSKCPQVEWLGWLNTIQ) the chain is Extracellular. 2 N-linked (GlcNAc...) asparagine glycosylation sites follow: Asn-30 and Asn-39. The helical transmembrane segment at 61–84 (PPFLWVLFVLATLENIFVLSVFCL) threads the bilayer. The Cytoplasmic segment spans residues 85 to 93 (HKSSCTVAE). Residues 94 to 118 (IYLGNLAAADLILACGLPFWAITIS) form a helical membrane-spanning segment. Residues 119 to 131 (NNFDWLFGETLCR) lie on the Extracellular side of the membrane. Cys-130 and Cys-211 are joined by a disulfide. The chain crosses the membrane as a helical span at residues 132 to 153 (VVNAIISMNLYSSICFLMLVSI). The Cytoplasmic portion of the chain corresponds to 154–175 (DRYLALVKTMSMGRMRGVRWAK). Tyr-156 is modified (phosphotyrosine). The chain crosses the membrane as a helical span at residues 176 to 198 (LYSLVIWGCTLLLSSPMLVFRTM). The Extracellular portion of the chain corresponds to 199-221 (KEYSDEGHNVTACVISYPSLIWE). Asn-207 carries N-linked (GlcNAc...) asparagine glycosylation. A helical membrane pass occupies residues 222-248 (VFTNMLLNVVGFLLPLSVITFCTMQIM). Over 249–267 (QVLRNNEMQKFKEIQTERR) the chain is Cytoplasmic. A helical membrane pass occupies residues 268–292 (ATVLVLVVLLLFIICWLPFQISTFL). Residues 293-311 (DTLHRLGILSSCQDERIID) lie on the Extracellular side of the membrane. The chain crosses the membrane as a helical span at residues 312–335 (VITQIASFMAYSNSCLNPLVYVIV). The Cytoplasmic segment spans residues 336 to 391 (GKRFRKKSWEVYQGVCQKGGCRSEPIQMENSMGTLRTSISVERQIHKLQDWAGSRQ). Tyr-347 is modified (phosphotyrosine). Residue Cys-351 is the site of S-palmitoyl cysteine attachment. Residue Ser-366 is modified to Phosphoserine. Thr-369 bears the Phosphothreonine mark. A phosphoserine; by GRK6 mark is found at Ser-373 and Ser-375.

This sequence belongs to the G-protein coupled receptor 1 family. Bradykinin receptor subfamily. BDKRB2 sub-subfamily. Forms a complex with PECAM1 and GNAQ. Interacts with PECAM1. Ubiquitous. Widespread in normal smooth muscle tissue and neurons.

The protein resides in the cell membrane. Functionally, receptor for bradykinin. It is associated with G proteins that activate a phosphatidylinositol-calcium second messenger system. The polypeptide is B2 bradykinin receptor (BDKRB2) (Homo sapiens (Human)).